The primary structure comprises 609 residues: MVTHAMEEPKTFNIPTFVLDENCNFIPEVLSRANAKYIKDVLIQDSYNTVCLANSFIPMTIQTAEQIMVIITKFKFSRARDLFEKVLRLGVHINRFYAGKKQVKHMITMMKSLFDTEEAMRRLDRALMGLFVDARGSSYMPLIALSLHENGLPDSKFTKAVKLINTTLNSFHNRPDADIEQYAQKLRAYNYLYKIPHYTLKEAVDVYSENLKDLSIGVNKKPTLLFTSSDDGYLSHIFNDMLFLTSTWNMIYNCKVQIRRLTTWIKYEINSIVEDCVLVGFQLPDLKDTILDLAALTSNMNLVDPDKDLFSHYKLILEKLFEISIFATKANICILPTFIKSHLIEFEDVLKRSNDDEDLNYLLLKSNDSDDEYDEDKLPIQVDPGRVDNVLTDSNFFNVTADNAFSSIAIMPISYDKIIDVEENVIQVLEVEMQSLSAVVYGAVANKYGLSLPQVIKRLNQNEGRASSRASSSHSTSTIPYSPPQSGRSTPTSILRQRAPIRSNSRSSSVSFSQDDDNRSHYSDETNISDYSYPMADLDLEDEEPMEDHPHSPQSASSNNSMSRRSRALQNEQRRRTPTMAPPSPARGQNNARLRRRTRRSTETNDERL.

The tract at residues 461–609 is disordered; the sequence is QNEGRASSRA…RSTETNDERL (149 aa). Positions 465-478 are enriched in low complexity; sequence RASSRASSSHSTST. Positions 484–495 are enriched in polar residues; sequence PQSGRSTPTSIL. 2 stretches are compositionally biased toward low complexity: residues 503–513 and 552–563; these read SNSRSSSVSFS and SPQSASSNNSMS. Over residues 600 to 609 the composition is skewed to basic and acidic residues; that stretch reads RSTETNDERL.

It belongs to the herpesviridae pp85 family. Phosphorylated.

Its subcellular location is the virion tegument. The protein localises to the host cytoplasm. The sequence is that of Phosphoprotein 85 (U14) from Homo sapiens (Human).